Here is a 315-residue protein sequence, read N- to C-terminus: Transaldolase (315 aa).

Lys131 serves as the catalytic Schiff-base intermediate with substrate.

This sequence belongs to the transaldolase family. Type 1 subfamily. In terms of assembly, homodimer.

The protein localises to the cytoplasm. The catalysed reaction is D-sedoheptulose 7-phosphate + D-glyceraldehyde 3-phosphate = D-erythrose 4-phosphate + beta-D-fructose 6-phosphate. Its pathway is carbohydrate degradation; pentose phosphate pathway; D-glyceraldehyde 3-phosphate and beta-D-fructose 6-phosphate from D-ribose 5-phosphate and D-xylulose 5-phosphate (non-oxidative stage): step 2/3. Functionally, transaldolase is important for the balance of metabolites in the pentose-phosphate pathway. The polypeptide is Transaldolase (Actinobacillus pleuropneumoniae serotype 5b (strain L20)).